A 416-amino-acid chain; its full sequence is Serine hydroxymethyltransferase (416 aa).

(6S)-5,6,7,8-tetrahydrofolate is bound by residues L121 and 125 to 127 (GHL). K229 carries the post-translational modification N6-(pyridoxal phosphate)lysine. Residues E245 and 354–356 (SPF) each bind (6S)-5,6,7,8-tetrahydrofolate.

It belongs to the SHMT family. Homodimer. Pyridoxal 5'-phosphate is required as a cofactor.

The protein resides in the cytoplasm. The enzyme catalyses (6R)-5,10-methylene-5,6,7,8-tetrahydrofolate + glycine + H2O = (6S)-5,6,7,8-tetrahydrofolate + L-serine. The protein operates within one-carbon metabolism; tetrahydrofolate interconversion. Its pathway is amino-acid biosynthesis; glycine biosynthesis; glycine from L-serine: step 1/1. Functionally, catalyzes the reversible interconversion of serine and glycine with tetrahydrofolate (THF) serving as the one-carbon carrier. This reaction serves as the major source of one-carbon groups required for the biosynthesis of purines, thymidylate, methionine, and other important biomolecules. Also exhibits THF-independent aldolase activity toward beta-hydroxyamino acids, producing glycine and aldehydes, via a retro-aldol mechanism. The sequence is that of Serine hydroxymethyltransferase from Aliivibrio fischeri (strain ATCC 700601 / ES114) (Vibrio fischeri).